The following is a 599-amino-acid chain: Elongation factor 4 (599 aa).

Residues 2–184 (KHIRNFSIIA…RLVRDIPPPE (183 aa)) enclose the tr-type G domain. GTP-binding positions include 14-19 (DHGKST) and 131-134 (NKID).

This sequence belongs to the TRAFAC class translation factor GTPase superfamily. Classic translation factor GTPase family. LepA subfamily.

It localises to the cell inner membrane. The enzyme catalyses GTP + H2O = GDP + phosphate + H(+). Its function is as follows. Required for accurate and efficient protein synthesis under certain stress conditions. May act as a fidelity factor of the translation reaction, by catalyzing a one-codon backward translocation of tRNAs on improperly translocated ribosomes. Back-translocation proceeds from a post-translocation (POST) complex to a pre-translocation (PRE) complex, thus giving elongation factor G a second chance to translocate the tRNAs correctly. Binds to ribosomes in a GTP-dependent manner. The sequence is that of Elongation factor 4 from Pectobacterium carotovorum subsp. carotovorum (strain PC1).